The following is a 263-amino-acid chain: uncharacterized protein (263 aa).

It belongs to the AtsA family.

The protein localises to the plastid. Its subcellular location is the chloroplast. This is an uncharacterized protein from Pyropia yezoensis (Susabi-nori).